A 178-amino-acid chain; its full sequence is MAEAIIPAAELSIKTLQNIVEGITGVDRKIAIGFKNLTDYTLENLGVYFNSGSSDRSIAYKINAQEALLFSARKSDHTARGTVGTFSYYIQDEDKTVHVMWSVPFDYNLYSNWWNIAVVDGRQPPDSNVHDNLYNGSGGMPYPNKPDQYINNEQKGFHLFGSMTNNGQATIEVELKKA.

Phosphocholine contacts are provided by S51, V83, S102, P104, and Y134. Residues 101 to 117 (WSVPFDYNLYSNWWNIA) are trp-rich region.

This sequence belongs to the actinoporin family. Plant subfamily.

Inhibited by sphingomyelin. In terms of biological role, actinoporin-related protein having hemolytic activity in vitro. Binds probably a phosphocholine derivative with the unique amido or hydroxyl groups found in sphingomyelin. Involved in drought tolerance. This Physcomitrium patens (Spreading-leaved earth moss) protein is Bryoporin.